A 548-amino-acid polypeptide reads, in one-letter code: Probable malate:quinone oxidoreductase (548 aa).

Residues 521-548 (DKPQAADSTPKPQLKPQPVQKEVADIAL) are disordered. Positions 530 to 541 (PKPQLKPQPVQK) are enriched in low complexity.

Belongs to the MQO family. The cofactor is FAD.

The enzyme catalyses (S)-malate + a quinone = a quinol + oxaloacetate. Its pathway is carbohydrate metabolism; tricarboxylic acid cycle; oxaloacetate from (S)-malate (quinone route): step 1/1. The protein is Probable malate:quinone oxidoreductase of Escherichia coli (strain 55989 / EAEC).